The following is a 131-amino-acid chain: Large-conductance mechanosensitive channel (131 aa).

The next 3 helical transmembrane spans lie at 8–28 (FAIRGNVIDLAVGVIIGGAFG), 30–50 (IVSSLVNDIIMPLVGLLLGGI), and 67–87 (GAFIQTVVDFLIIAFSIFLFV).

It belongs to the MscL family. As to quaternary structure, homopentamer.

It localises to the cell membrane. In terms of biological role, channel that opens in response to stretch forces in the membrane lipid bilayer. May participate in the regulation of osmotic pressure changes within the cell. In Geobacillus thermodenitrificans (strain NG80-2), this protein is Large-conductance mechanosensitive channel.